The sequence spans 398 residues: Protein trichome birefringence-like 45 (398 aa).

A helical; Signal-anchor for type II membrane protein membrane pass occupies residues 1–21 (MAAVQCLTFLFLFLLQNATSA). The GDS motif motif lies at 131–133 (GDS). A DCXHWCLPGXXDXWN motif motif is present at residues 375 to 389 (DCSHWCLPGLPDTWN).

It belongs to the PC-esterase family. TBL subfamily.

Its subcellular location is the membrane. Functionally, may act as a bridging protein that binds pectin and other cell wall polysaccharides. Probably involved in maintaining esterification of pectins. May be involved in the specific O-acetylation of cell wall polymers. This chain is Protein trichome birefringence-like 45 (TBL45), found in Arabidopsis thaliana (Mouse-ear cress).